The primary structure comprises 88 residues: Small ribosomal subunit protein bS20 (88 aa).

Positions 1 to 21 (MANSAQAKKRARQNVKARKHN) are disordered. Positions 7 to 21 (AKKRARQNVKARKHN) are enriched in basic residues.

It belongs to the bacterial ribosomal protein bS20 family.

Functionally, binds directly to 16S ribosomal RNA. The chain is Small ribosomal subunit protein bS20 from Acinetobacter baumannii (strain AB307-0294).